The primary structure comprises 172 residues: MAKMQAKVQQDERDDGLREKMISVNRVTKVVKGGRILGFAALTVVGDGDGRIGMGKGKAKEVPVAVQKAMDEARRKMVKVSLKNGTLQHEVVGKHGAAKVLMMPAKEGTGVIAGGPMRAIFEVMGVTNVVTKSHGSTNPYNMVRATLDGLQKMSTPSEIAAKRGKSVEDILG.

The 64-residue stretch at 17–80 (LREKMISVNR…DEARRKMVKV (64 aa)) folds into the S5 DRBM domain.

The protein belongs to the universal ribosomal protein uS5 family. In terms of assembly, part of the 30S ribosomal subunit. Contacts proteins S4 and S8.

With S4 and S12 plays an important role in translational accuracy. Functionally, located at the back of the 30S subunit body where it stabilizes the conformation of the head with respect to the body. In Cupriavidus pinatubonensis (strain JMP 134 / LMG 1197) (Cupriavidus necator (strain JMP 134)), this protein is Small ribosomal subunit protein uS5.